We begin with the raw amino-acid sequence, 463 residues long: General transcription factor IIH subunit 4 (463 aa).

Belongs to the TFB2 family. In terms of assembly, component of the 7-subunit TFIIH core complex composed of XPB/ERCC3, XPD/ERCC2, GTF2H1, GTF2H2, GTF2H3, GTF2H4 and GTF2H5, which is active in NER. The core complex associates with the 3-subunit CDK-activating kinase (CAK) module composed of CCNH/cyclin H, CDK7 and MNAT1 to form the 10-subunit holoenzyme (holo-TFIIH) active in transcription. Part of TBP-based Pol II pre-initiation complex (PIC), in which Pol II core assembles with general transcription factors and other specific initiation factors including GTF2E1, GTF2E2, GTF2F1, GTF2F2, TCEA1, ERCC2, ERCC3, GTF2H2, GTF2H3, GTF2H4, GTF2H5, GTF2A1, GTF2A2, GTF2B and TBP; this large multi-subunit PIC complex mediates DNA unwinding and targets Pol II core to the transcription start site where the first phosphodiester bond forms.

The protein resides in the nucleus. Component of the general transcription and DNA repair factor IIH (TFIIH) core complex, which is involved in general and transcription-coupled nucleotide excision repair (NER) of damaged DNA and, when complexed to CAK, in RNA transcription by RNA polymerase II. In NER, TFIIH acts by opening DNA around the lesion to allow the excision of the damaged oligonucleotide and its replacement by a new DNA fragment. In transcription, TFIIH has an essential role in transcription initiation. When the pre-initiation complex (PIC) has been established, TFIIH is required for promoter opening and promoter escape. Phosphorylation of the C-terminal tail (CTD) of the largest subunit of RNA polymerase II by the kinase module CAK controls the initiation of transcription. The chain is General transcription factor IIH subunit 4 (Gtf2h4) from Mus musculus (Mouse).